The sequence spans 177 residues: Large ribosomal subunit protein uL6 (177 aa).

This sequence belongs to the universal ribosomal protein uL6 family. Part of the 50S ribosomal subunit.

In terms of biological role, this protein binds to the 23S rRNA, and is important in its secondary structure. It is located near the subunit interface in the base of the L7/L12 stalk, and near the tRNA binding site of the peptidyltransferase center. The protein is Large ribosomal subunit protein uL6 of Edwardsiella ictaluri (strain 93-146).